A 417-amino-acid chain; its full sequence is S-inosyl-L-homocysteine hydrolase (417 aa).

Residues Asp124 and Glu149 each coordinate substrate. 150–152 contributes to the NAD(+) binding site; that stretch reads TTT. 2 residues coordinate substrate: Lys179 and Asp183. NAD(+) contacts are provided by residues Asn184, 213–218, Glu236, Asn271, 292–294, and Asn339; these read GYGWCG and SGH.

The protein belongs to the adenosylhomocysteinase family. NAD(+) is required as a cofactor.

It is found in the cytoplasm. The catalysed reaction is S-inosyl-L-homocysteine + H2O = L-homocysteine + inosine. It participates in amino-acid biosynthesis; S-adenosyl-L-methionine biosynthesis. In terms of biological role, catalyzes the hydrolysis of S-inosyl-L-homocysteine (SIH) to L-homocysteine (Hcy) and inosine. Likely functions in a S-adenosyl-L-methionine (SAM) recycling pathway from S-adenosyl-L-homocysteine (SAH) produced from SAM-dependent methylation reactions. Can also catalyze the reverse reaction in vitro, i.e. the synthesis of SIH from Hcy and inosine. The sequence is that of S-inosyl-L-homocysteine hydrolase from Methanothermobacter thermautotrophicus (strain ATCC 29096 / DSM 1053 / JCM 10044 / NBRC 100330 / Delta H) (Methanobacterium thermoautotrophicum).